Consider the following 309-residue polypeptide: Malate dehydrogenase (309 aa).

NAD(+) contacts are provided by residues Gly-9–Gly-14 and Asp-33. Substrate contacts are provided by Arg-82 and Arg-88. NAD(+) contacts are provided by residues Asn-95 and Val-118–Asn-120. Substrate contacts are provided by Asn-120 and Arg-151. His-175 serves as the catalytic Proton acceptor.

This sequence belongs to the LDH/MDH superfamily. MDH type 3 family. Homotetramer (active enzyme); homodimer and homotrimer at temperatures lower than 55 degrees Celsius (inactive forms).

It carries out the reaction (S)-malate + NAD(+) = oxaloacetate + NADH + H(+). Its function is as follows. Catalyzes the reversible oxidation of malate to oxaloacetate. The chain is Malate dehydrogenase from Chloroflexus aurantiacus (strain ATCC 29366 / DSM 635 / J-10-fl).